The chain runs to 623 residues: Prothrombin (623 aa).

Residues 1–24 (MAHVGGLWLHGCLALAVLVSLVHS) form the signal peptide. The propeptide occupies 25 to 43 (QHVFMAPQQALSLLQRARR). In terms of domain architecture, Gla spans 44 to 90 (ANSGFFEEMRKGNLERECVEEQCSREEAYEALESPSETDAFWAKYTA). 10 positions are modified to 4-carboxyglutamate: glutamate 50, glutamate 51, glutamate 58, glutamate 60, glutamate 63, glutamate 64, glutamate 69, glutamate 70, glutamate 73, and glutamate 76. A disulfide bridge connects residues cysteine 61 and cysteine 66. 11 disulfide bridges follow: cysteine 91–cysteine 104, cysteine 109–cysteine 187, cysteine 130–cysteine 170, cysteine 158–cysteine 182, cysteine 214–cysteine 292, cysteine 235–cysteine 275, cysteine 263–cysteine 287, cysteine 337–cysteine 483, cysteine 392–cysteine 408, cysteine 537–cysteine 551, and cysteine 565–cysteine 595. Kringle domains lie at 108 to 187 (NCAE…IPVC) and 213 to 292 (TCVP…LDYC). Asparagine 120 and asparagine 144 each carry an N-linked (GlcNAc...) asparagine glycan. The region spanning 365–619 (IVEGSDAEIG…LKKWMQKVID (255 aa)) is the Peptidase S1 domain. Histidine 407 (charge relay system) is an active-site residue. N-linked (GlcNAc...) asparagine glycosylation occurs at asparagine 417. Aspartate 463 serves as the catalytic Charge relay system. The high affinity receptor-binding region which is also known as the TP508 peptide stretch occupies residues 552 to 574 (AGYKPDEGKRGDACEGDSGGPFV). Serine 569 serves as the catalytic Charge relay system.

The protein belongs to the peptidase S1 family. As to quaternary structure, heterodimer (named alpha-thrombin) of a light and a heavy chain; disulfide-linked. Forms a heterodimer with SERPINA5. In plasma, interacts (via N-terminus) with alpha-1-microglobulin; this interaction does not prevent the activation of prothrombin to thrombin. The gamma-carboxyglutamyl residues, which bind calcium ions, result from the carboxylation of glutamyl residues by a microsomal enzyme, the vitamin K-dependent carboxylase. The modified residues are necessary for the calcium-dependent interaction with a negatively charged phospholipid surface, which is essential for the conversion of prothrombin to thrombin. Post-translationally, in the penultimate step of the coagulation cascade, prothrombin is converted to thrombin by the prothrombinase complex composed of factor Xa (F10), cofactor Va (F5), and phospholipids. This activation requires factor Xa-catalyzed sequential cleavage at 2 sites, Arg-315 and Arg-364, along 2 possible pathways. In the first pathway, the first cleavage occurs at Arg-315, leading to the formation of the inactive intermediate prethrombin-2. This pathway preferentially occurs on platelets and in the absence of cofactor Va. In the second pathway, the first cleavage occurs at Arg-364, which separates protease domain into 2 chains that remain connected through a disulfide bond and generates the active intermediate meizothrombin. The presence of cofactor Va directs activation along the meizothrombin pathway and greatly accelerates the rate of cleavage at Arg-364, but has a smaller effect on the cleavage of meizothrombin at Arg-315. Meizothrombin accumulates as an intermediate when prothrombinase is assembled on the membrane of red blood cells.

It catalyses the reaction Selective cleavage of Arg-|-Gly bonds in fibrinogen to form fibrin and release fibrinopeptides A and B.. With respect to regulation, activity is promoted in the presence of negatively charged surfaces, such as polyphosphate and dextran sulfate. Inhibited by SERPINA5. Its function is as follows. Thrombin, which cleaves bonds after Arg and Lys, converts fibrinogen to fibrin and activates factors V, VII, VIII, XIII, and, in complex with thrombomodulin, protein C. Functions in blood homeostasis, inflammation and wound healing. Activates coagulation factor XI (F11); activation is promoted by the contact with negatively charged surfaces. Triggers the production of pro-inflammatory cytokines, such as MCP-1/CCL2 and IL8/CXCL8, in endothelial cells. This chain is Prothrombin (F2), found in Sus scrofa (Pig).